The sequence spans 292 residues: Poly(U)-specific endoribonuclease-B (292 aa).

Positions 8–285 (VNHELSKLFN…IGTAYPALLS (278 aa)) constitute an EndoU domain. Active-site residues include H162, H178, and K224.

The protein belongs to the ENDOU family. In terms of assembly, monomer. Mn(2+) serves as cofactor.

The protein localises to the nucleus. The catalysed reaction is uridylyl-uridylyl-ribonucleotide-RNA = a 3'-end uridylyl-2',3'-cyclophospho-uridine-RNA + a 5'-end dephospho-ribonucleoside-RNA. In terms of biological role, poly(U)-specific endoribonuclease involved in the processing of intron-encoded box C/D snoRNAs, such as U16 and U86. Releases products that have 2',3'-cyclic phosphate termini at the 3'-end. The protein is Poly(U)-specific endoribonuclease-B (endou-b) of Xenopus laevis (African clawed frog).